Here is a 459-residue protein sequence, read N- to C-terminus: Argininosuccinate lyase (459 aa).

This sequence belongs to the lyase 1 family. Argininosuccinate lyase subfamily.

The protein resides in the cytoplasm. It catalyses the reaction 2-(N(omega)-L-arginino)succinate = fumarate + L-arginine. It functions in the pathway amino-acid biosynthesis; L-arginine biosynthesis; L-arginine from L-ornithine and carbamoyl phosphate: step 3/3. The sequence is that of Argininosuccinate lyase from Staphylococcus aureus (strain bovine RF122 / ET3-1).